Reading from the N-terminus, the 143-residue chain is Peptide methionine sulfoxide reductase MsrB (143 aa).

The MsrB domain occupies 5–126 (KEEKIKSLNR…NSAALRFVPK (122 aa)). Cys115 functions as the Nucleophile in the catalytic mechanism.

Belongs to the MsrB Met sulfoxide reductase family.

The enzyme catalyses L-methionyl-[protein] + [thioredoxin]-disulfide + H2O = L-methionyl-(R)-S-oxide-[protein] + [thioredoxin]-dithiol. In Bacillus subtilis (strain 168), this protein is Peptide methionine sulfoxide reductase MsrB.